The sequence spans 1198 residues: Regulator of G-protein signaling 3 (1198 aa).

Positions 137 to 256 (GAGQLRLSID…TPDKEISGWY (120 aa)) constitute a C2 domain. Residues 299-376 (KITIPRGKDG…EIILLVWRMV (78 aa)) enclose the PDZ domain. An Omega-N-methylarginine modification is found at Arg448. The disordered stretch occupies residues 669 to 933 (QQLAASPPDS…GAEGGLSLRV (265 aa)). The residue at position 674 (Ser674) is a Phosphoserine. Residues 679-697 (KMFETEADEKREMALEEGK) are compositionally biased toward basic and acidic residues. The segment covering 739 to 751 (EPLSSKDSATSEG) has biased composition (polar residues). Over residues 753–773 (PPGPDAPPSKDVPPCQEPPPA) the composition is skewed to pro residues. The segment covering 877–906 (GDEEDAEEAEEVEEGEEGEEDEDEDTSDDN) has biased composition (acidic residues). Residues 907 to 917 (YGERSEAKRSS) are compositionally biased toward basic and acidic residues. Ser943, Ser946, Ser978, and Ser1007 each carry phosphoserine. 2 disordered regions span residues 1007–1026 (SGADTVGDDDEASRKRKSKN) and 1032–1056 (KNKLGIFRRRNESPGAPPAGKADKM). An RGS domain is found at 1073 to 1198 (SLEKLLVHKY…INQKKMSPPL (126 aa)).

As to quaternary structure, binds EFNB1 and EFNB2. Binds the GNB1-GNG2 heterodimer. Post-translationally, phosphorylated by cyclic GMP-dependent protein kinase. In terms of processing, ISGylated.

The protein resides in the cytoplasm. The protein localises to the nucleus. It localises to the cell membrane. Down-regulates signaling from heterotrimeric G-proteins by increasing the GTPase activity of the alpha subunits, thereby driving them into their inactive GDP-bound form. Down-regulates G-protein-mediated release of inositol phosphates and activation of MAP kinases. The sequence is that of Regulator of G-protein signaling 3 (RGS3) from Homo sapiens (Human).